A 396-amino-acid chain; its full sequence is NASP-related protein sim3 (396 aa).

Residues 1–31 form a disordered region; that stretch reads MSSDTKTLENSKGNSATDADTKNPSSSDSRA. TPR repeat units follow at residues 32 to 65 and 89 to 122; these read IEQL…SESI and IENS…GSFT. The tract at residues 135–164 is disordered; it reads NEENSSIAHPEKESEEKETNEASPASEEDE. The span at 143–154 shows a compositional bias: basic and acidic residues; the sequence is HPEKESEEKETN. One copy of the TPR 3 repeat lies at 199 to 232; the sequence is ADIYDLLGELSLEIENFSQASQDLKTALEWKEKV. Residues 267–329 are a coiled coil; the sequence is CEHVEKAAEI…QKTLDLKHGA (63 aa). The segment covering 284–301 has biased composition (basic and acidic residues); it reads RENEVTDKKGKGKQKAEE. Disordered stretches follow at residues 284–307 and 334–396; these read RENE…LTSD and EAVM…KKKD. Residues 343 to 353 show a composition bias toward low complexity; sequence SSLLSKDSSSL.

This sequence belongs to the NASP family. In terms of assembly, interacts with cnp1, hht1, hht2 and hht3; has a preference for CENP-A (cnp1) over histone H3 (hht1/2/3).

It is found in the nucleus. Its function is as follows. Histone H3 and H3-like CENP-A-specific chaperone. Promotes delivery and incorporation of CENP-A in centromeric chromatin, probably by escorting nascent CENP-A to CENP-A chromatin assembly factors. Required for central core silencing and normal chromosome segregation. This Schizosaccharomyces pombe (strain 972 / ATCC 24843) (Fission yeast) protein is NASP-related protein sim3 (sim3).